We begin with the raw amino-acid sequence, 151 residues long: Neuroglobin (151 aa).

The region spanning 1–149 (MERPEPELIR…VVQAMSRGWD (149 aa)) is the Globin domain. Cysteines 46 and 55 form a disulfide. The heme b site is built by His-64 and His-96.

Belongs to the globin family. Monomer. Homodimer and homotetramer; disulfide-linked. Mainly monomeric but also detected as part of homodimers and homotetramers. Interacts with 14-3-3 proteins; regulates the phosphorylation of NGB. Could interact (ferrous form) with G-alpha(i) proteins (GTP-bound form). Phosphorylated during hypoxia by ERK1/ERK2. Phosphorylation regulates the heme pocket hexacoordination preventing the association of His-64 with the heme metal center. Thereby, promotes the access of dioxygen and nitrite to the heme and stimulates the nitrite reductase activity. Phosphorylation during hypoxia is stabilized by 14-3-3 proteins. Post-translationally, an intramolecular Cys-46/Cys-55 disulfide bond, not necessarily present in orthologs, regulates the heme pocket hexacoordination preventing the association of His-64 with the heme metal center. Thereby, promotes the access of dioxygen and nitrite to the heme and stimulates the nitrite reductase activity. Predominantly expressed in brain, the strongest expression is seen in the frontal lobe, the subthalamic nucleus and the thalamus.

It localises to the cytoplasm. It is found in the cytosol. The protein localises to the mitochondrion matrix. The catalysed reaction is Fe(III)-heme b-[protein] + nitric oxide + H2O = Fe(II)-heme b-[protein] + nitrite + 2 H(+). Monomeric globin with a bis-histidyl six-coordinate heme-iron atom through which it can bind dioxygen, carbon monoxide and nitric oxide. Could help transport oxygen and increase its availability to the metabolically active neuronal tissues, though its low quantity in tissues as well as its high affinity for dioxygen, which may limit its oxygen-releasing ability, argue against it. The ferrous/deoxygenated form exhibits a nitrite reductase activity and it could produce nitric oxide which in turn inhibits cellular respiration in response to hypoxia. In its ferrous/deoxygenated state, it may also exhibit GDI (Guanine nucleotide Dissociation Inhibitor) activity toward heterotrimeric G-alpha proteins, thereby regulating signal transduction to facilitate neuroprotective responses in the wake of hypoxia and associated oxidative stress. This chain is Neuroglobin, found in Homo sapiens (Human).